The sequence spans 720 residues: Polyribonucleotide nucleotidyltransferase (720 aa).

Aspartate 486 and aspartate 492 together coordinate Mg(2+). The KH domain occupies 553–612 (PRITVINVPKEKIREVIGTGGKVIREIVEFSGAKIDIEDDGTIKIASTSEESTQKAIDRI). Residues 622–690 (GKIYNGKVVK…DRGKVKLSMR (69 aa)) enclose the S1 motif domain. Positions 698-720 (EDISDKVGPKGGRGGRGEGDLAE) are disordered.

It belongs to the polyribonucleotide nucleotidyltransferase family. The cofactor is Mg(2+).

The protein localises to the cytoplasm. It catalyses the reaction RNA(n+1) + phosphate = RNA(n) + a ribonucleoside 5'-diphosphate. Its function is as follows. Involved in mRNA degradation. Catalyzes the phosphorolysis of single-stranded polyribonucleotides processively in the 3'- to 5'-direction. This Granulibacter bethesdensis (strain ATCC BAA-1260 / CGDNIH1) protein is Polyribonucleotide nucleotidyltransferase.